We begin with the raw amino-acid sequence, 98 residues long: Derivative of benzaldehyde biosynthesis cluster protein C (98 aa).

Belongs to the YciI family.

It participates in secondary metabolite biosynthesis. Part of the gene cluster that mediates the biosynthesis of the antibiotic 2,4-dihydroxy-3-methyl-6-(2-oxopropyl)benzaldehyde (DHMBA) and its derivatives. The direct non-reducing polyketide synthase dbaI product is 2,4-dihydroxy-3-methyl-6-(2-oxopropyl)benzaldehyde (DHMBA), produced by condensation of one acetyl-CoA starter unit with 4 malonyl-CoA units and one methylation step. The FAD-dependent monooxygenase dbaH is responsible for the synthesis of yellow pigments derived from the oxidation of DHMBA. The roles of dbaB, C, E and F have still to be determined. The protein is Derivative of benzaldehyde biosynthesis cluster protein C of Emericella nidulans (strain FGSC A4 / ATCC 38163 / CBS 112.46 / NRRL 194 / M139) (Aspergillus nidulans).